Here is a 323-residue protein sequence, read N- to C-terminus: Tyrosine--tRNA ligase (323 aa).

Residue Tyr-36 coordinates L-tyrosine. Positions 41 to 49 (PSGEIHLGH) match the 'HIGH' region motif. L-tyrosine-binding residues include Tyr-158, Gln-162, Asp-165, and Gln-180. The short motif at 214–218 (KMSSS) is the 'KMSKS' region element. Ser-217 provides a ligand contact to ATP.

It belongs to the class-I aminoacyl-tRNA synthetase family. TyrS type 3 subfamily. Homodimer.

It localises to the cytoplasm. The enzyme catalyses tRNA(Tyr) + L-tyrosine + ATP = L-tyrosyl-tRNA(Tyr) + AMP + diphosphate + H(+). Functionally, catalyzes the attachment of tyrosine to tRNA(Tyr) in a two-step reaction: tyrosine is first activated by ATP to form Tyr-AMP and then transferred to the acceptor end of tRNA(Tyr). This Archaeoglobus fulgidus (strain ATCC 49558 / DSM 4304 / JCM 9628 / NBRC 100126 / VC-16) protein is Tyrosine--tRNA ligase.